Consider the following 699-residue polypeptide: Macoilin-2 (699 aa).

A run of 4 helical transmembrane segments spans residues 28–48 (TFLY…DFVL), 75–95 (AFSV…LLFI), 120–140 (VCLP…AIRF), and 154–174 (FAAH…KSYV). Disordered regions lie at residues 219 to 289 (AAAA…SILP), 322 to 411 (LLKD…PNNQ), 432 to 451 (LQAS…SLGT), and 679 to 699 (FMDT…PLKK). N-linked (GlcNAc...) asparagine glycans are attached at residues asparagine 241, asparagine 267, asparagine 345, and asparagine 365. Residues 257–271 (LEYREKERGKNESKK) show a composition bias toward basic and acidic residues. A compositionally biased stretch (low complexity) spans 329-346 (SSSSSSTSSNSNKNYKNA). The span at 366–382 (GSVPSSSGPSSSASSSS) shows a compositional bias: low complexity. A glycan (N-linked (GlcNAc...) asparagine) is linked at asparagine 690.

Belongs to the macoilin family.

Its subcellular location is the nucleus membrane. It localises to the cell projection. It is found in the axon. The protein localises to the rough endoplasmic reticulum membrane. Functionally, may play a role in the regulation of neuronal activity. The protein is Macoilin-2 of Danio rerio (Zebrafish).